We begin with the raw amino-acid sequence, 307 residues long: UDP-3-O-acyl-N-acetylglucosamine deacetylase (307 aa).

Zn(2+)-binding residues include histidine 78, histidine 241, and aspartate 245. Histidine 268 acts as the Proton donor in catalysis.

It belongs to the LpxC family. The cofactor is Zn(2+).

The enzyme catalyses a UDP-3-O-[(3R)-3-hydroxyacyl]-N-acetyl-alpha-D-glucosamine + H2O = a UDP-3-O-[(3R)-3-hydroxyacyl]-alpha-D-glucosamine + acetate. The protein operates within glycolipid biosynthesis; lipid IV(A) biosynthesis; lipid IV(A) from (3R)-3-hydroxytetradecanoyl-[acyl-carrier-protein] and UDP-N-acetyl-alpha-D-glucosamine: step 2/6. Its function is as follows. Catalyzes the hydrolysis of UDP-3-O-myristoyl-N-acetylglucosamine to form UDP-3-O-myristoylglucosamine and acetate, the committed step in lipid A biosynthesis. This Polaromonas sp. (strain JS666 / ATCC BAA-500) protein is UDP-3-O-acyl-N-acetylglucosamine deacetylase.